We begin with the raw amino-acid sequence, 631 residues long: Hepatocyte nuclear factor 1-alpha (631 aa).

Residues 1–31 form a dimerization region; it reads MVSKLSQLQTELLAALLESGLSKEALIQALG. One can recognise an HNF-p1 domain in the interval 1 to 32; the sequence is MVSKLSQLQTELLAALLESGLSKEALIQALGE. The interval 40-81 is disordered; sequence GEGPLDKGESCGGGRGELAELPNGLGETRGSEDETDDDGEDF. Serine 70 carries the post-translational modification Phosphoserine. Position 74 is a phosphothreonine (threonine 74). The region spanning 87–182 is the POU-specific atypical domain; sequence KELENLSPEE…VAQQFTHAGQ (96 aa). The residue at position 93 (serine 93) is a Phosphoserine. Lysine 117 participates in a covalent cross-link: Glycyl lysine isopeptide (Lys-Gly) (interchain with G-Cter in ubiquitin). Interaction with DNA regions lie at residues 130-132, 143-149, 155-158, and 203-206; these read QRE, HLSQHLN, KTQK, and RFKW. The disordered stretch occupies residues 183 to 205; that stretch reads GGLIEEPTGDELPTKKGRRNRFK. The Nuclear localization signal motif lies at 197 to 205; that stretch reads KKGRRNRFK. Positions 199–279 form a DNA-binding region, homeobox; HNF1-type; the sequence is GRRNRFKWGP…NRRKEEAFRH (81 aa). Serine 247 is subject to Phosphoserine. Interaction with DNA stretches follow at residues 263-265 and 270-273; these read RVY and NRRK. Disordered stretches follow at residues 283 to 358 and 545 to 567; these read MDTY…GLEP and SDTE…TLHV. Residues 288 to 298 show a composition bias toward pro residues; sequence GPPPGPGPGPA. Serine 313 is modified (phosphoserine). The segment covering 325–353 has biased composition (polar residues); it reads PATSETAEVPSSSGGPLVTVSTPLHQVSP.

This sequence belongs to the HNF1 homeobox family. Binds DNA as a dimer. Heterotetramer with PCBD1; formed by a dimer of dimers. Interacts with PCBD1. Interacts with BHLHE41. Interacts with NR5A2. Interacts with SPOP; this interaction promotes ubiquitination and degradation of HNF1A. In terms of processing, ubiquitinated in s SPOP-dependent manner; leading to prteasomal degradation. Liver.

It is found in the nucleus. Functionally, transcriptional activator that regulates the tissue specific expression of multiple genes, especially in pancreatic islet cells and in liver. Binds to the inverted palindrome 5'-GTTAATNATTAAC-3'. Activates the transcription of CYP1A2, CYP2E1 and CYP3A11. (Microbial infection) Plays a crucial role for hepatitis B virus gene transcription and DNA replication. Mechanistically, synergistically cooperates with NR5A2 to up-regulate the activity of one of the critical cis-elements in the hepatitis B virus genome enhancer II (ENII). This chain is Hepatocyte nuclear factor 1-alpha (HNF1A), found in Homo sapiens (Human).